A 401-amino-acid chain; its full sequence is Exodeoxyribonuclease 7 large subunit (401 aa).

The protein belongs to the XseA family. In terms of assembly, heterooligomer composed of large and small subunits.

The protein localises to the cytoplasm. The enzyme catalyses Exonucleolytic cleavage in either 5'- to 3'- or 3'- to 5'-direction to yield nucleoside 5'-phosphates.. Functionally, bidirectionally degrades single-stranded DNA into large acid-insoluble oligonucleotides, which are then degraded further into small acid-soluble oligonucleotides. This is Exodeoxyribonuclease 7 large subunit from Clostridioides difficile (strain 630) (Peptoclostridium difficile).